The following is a 403-amino-acid chain: Glucosyl-3-phosphoglycerate synthase (403 aa).

Residue D150 coordinates a divalent metal cation. Position 189–192 (189–192) interacts with (2R)-3-phosphoglycerate; sequence GRVT. H273 is an a divalent metal cation binding site.

Belongs to the glycosyltransferase 2 family. As to quaternary structure, homodimer. Requires Mn(2+) as cofactor. Co(2+) serves as cofactor. The cofactor is Mg(2+). It depends on Ni(2+) as a cofactor.

It catalyses the reaction an NDP-alpha-D-glucose + (2R)-3-phosphoglycerate = (2R)-2-O-(alpha-D-glucopyranosyl)-3-phospho-glycerate + a ribonucleoside 5'-diphosphate + H(+). In terms of biological role, involved in the biosynthesis of 6-O-methylglucose lipopolysaccarides (MGLPs). Catalyzes the transfer of a glucose (Glc) moiety from uridine diphosphate (UDP-Glc) to the position 2 of 3-phospho-D-glycerate (3-PGA) to form glucosyl-3-phosphoglycerate (GPG). GpgS is most active with UDP-glucose, followed by GDP-glucose, ADP-glucose, and to a lesser extent, TDP-glucose. 3-PGA is the only acceptor for these glucosyl donors. This chain is Glucosyl-3-phosphoglycerate synthase, found in Persephonella marina (strain DSM 14350 / EX-H1).